The primary structure comprises 466 residues: Glutamate--tRNA ligase (466 aa).

The short motif at 10–20 (PSPTGYLHIGG) is the 'HIGH' region element. The 'KMSKS' region signature appears at 237–241 (RLSKR). Lys240 serves as a coordination point for ATP.

The protein belongs to the class-I aminoacyl-tRNA synthetase family. Glutamate--tRNA ligase type 1 subfamily. Monomer.

Its subcellular location is the cytoplasm. It catalyses the reaction tRNA(Glu) + L-glutamate + ATP = L-glutamyl-tRNA(Glu) + AMP + diphosphate. Its function is as follows. Catalyzes the attachment of glutamate to tRNA(Glu) in a two-step reaction: glutamate is first activated by ATP to form Glu-AMP and then transferred to the acceptor end of tRNA(Glu). This is Glutamate--tRNA ligase from Syntrophotalea carbinolica (strain DSM 2380 / NBRC 103641 / GraBd1) (Pelobacter carbinolicus).